A 408-amino-acid chain; its full sequence is Serine/threonine transporter SstT (408 aa).

Helical transmembrane passes span 11 to 31 (LANG…VSLA), 43 to 63 (FLGS…VFIL), 82 to 102 (IVVL…LLSM), 141 to 161 (ALMT…GLAL), 192 to 212 (IGIF…AIAG), 216 to 236 (LLAV…PLIV), 298 to 318 (MGGA…TLGI), 339 to 359 (ASGV…LFGI), and 363 to 383 (VAMQ…AAET).

Belongs to the dicarboxylate/amino acid:cation symporter (DAACS) (TC 2.A.23) family.

The protein localises to the cell inner membrane. It carries out the reaction L-serine(in) + Na(+)(in) = L-serine(out) + Na(+)(out). The catalysed reaction is L-threonine(in) + Na(+)(in) = L-threonine(out) + Na(+)(out). Its function is as follows. Involved in the import of serine and threonine into the cell, with the concomitant import of sodium (symport system). This Shewanella sp. (strain MR-7) protein is Serine/threonine transporter SstT.